Consider the following 149-residue polypeptide: MFRTMLNSKIHRATVTQADLHYVGSVTIDADLMAAADLLPGEQVTIVDINNGARLETYAISGPAGSGIIGINGAAARLVHPGDLVIIISYGIMDDAEARRHVPKVLFVDAENRIVGQGGDPAAALPGDPSSLRGDVLDPAGARGLGGGA.

Serine 25 acts as the Schiff-base intermediate with substrate; via pyruvic acid in catalysis. Serine 25 carries the post-translational modification Pyruvic acid (Ser). Substrate is bound at residue threonine 57. Tyrosine 58 serves as the catalytic Proton donor. 73-75 lines the substrate pocket; the sequence is GAA. A disordered region spans residues 119 to 149; the sequence is GDPAAALPGDPSSLRGDVLDPAGARGLGGGA.

Belongs to the PanD family. Heterooctamer of four alpha and four beta subunits. Pyruvate is required as a cofactor. Is synthesized initially as an inactive proenzyme, which is activated by self-cleavage at a specific serine bond to produce a beta-subunit with a hydroxyl group at its C-terminus and an alpha-subunit with a pyruvoyl group at its N-terminus.

The protein resides in the cytoplasm. It catalyses the reaction L-aspartate + H(+) = beta-alanine + CO2. It functions in the pathway cofactor biosynthesis; (R)-pantothenate biosynthesis; beta-alanine from L-aspartate: step 1/1. Functionally, catalyzes the pyruvoyl-dependent decarboxylation of aspartate to produce beta-alanine. This chain is Aspartate 1-decarboxylase, found in Parafrankia sp. (strain EAN1pec).